A 346-amino-acid chain; its full sequence is Cyclin-dependent kinase 20 (346 aa).

Positions 4–288 (YCILGRIGEG…ASQALLHQYF (285 aa)) constitute a Protein kinase domain. ATP contacts are provided by residues 10–18 (IGEGAHGIV) and Lys33. The Proton acceptor role is filled by Asp127. Residues 298–324 (SELPIPQRPGGPTPKAHPGPPHVHDFH) are disordered. Positions 303–318 (PQRPGGPTPKAHPGPP) are enriched in pro residues.

It belongs to the protein kinase superfamily. CMGC Ser/Thr protein kinase family. CDC2/CDKX subfamily. In terms of assembly, monomer. Interacts with TBC1D32 and MAK.

It is found in the nucleus. Its subcellular location is the cytoplasm. The protein localises to the cell projection. The protein resides in the cilium. It catalyses the reaction L-seryl-[protein] + ATP = O-phospho-L-seryl-[protein] + ADP + H(+). The enzyme catalyses L-threonyl-[protein] + ATP = O-phospho-L-threonyl-[protein] + ADP + H(+). Required for high-level Shh responses in the developing neural tube. Together with TBC1D32, controls the structure of the primary cilium by coordinating assembly of the ciliary membrane and axoneme, allowing GLI2 to be properly activated in response to SHH signaling. Involved in cell growth. Activates CDK2, a kinase involved in the control of the cell cycle, by phosphorylating residue 'Thr-160'. The protein is Cyclin-dependent kinase 20 (Cdk20) of Rattus norvegicus (Rat).